Reading from the N-terminus, the 150-residue chain is Large ribosomal subunit protein bL9 (150 aa).

Belongs to the bacterial ribosomal protein bL9 family.

Its function is as follows. Binds to the 23S rRNA. This is Large ribosomal subunit protein bL9 from Streptococcus pyogenes serotype M3 (strain SSI-1).